Here is a 265-residue protein sequence, read N- to C-terminus: HUWE1-associated protein modifying stress responses (265 aa).

Disordered regions lie at residues methionine 1–serine 22, glycine 140–threonine 173, and isoleucine 194–glycine 219. Low complexity predominate over residues serine 147–glutamate 172.

Belongs to the HAPSTR1 family. As to quaternary structure, oligomer.

It is found in the nucleus. Its subcellular location is the cytoplasm. Functionally, acts as a central player within a network of stress response pathways promoting cellular adaptability. Functions as a negative regulator of TP53/P53 in the cellular response to telomere erosion and probably also DNA damage. The chain is HUWE1-associated protein modifying stress responses from Danio rerio (Zebrafish).